Reading from the N-terminus, the 476-residue chain is Serine protease HTRA4 (476 aa).

The N-terminal stretch at 1 to 31 (MIRPQLRTAGLGRCLLPGLLLLLVPVLWAGA) is a signal peptide. The region spanning 36–109 (TQPSCPAVCQ…PGFPSTCGCP (74 aa)) is the IGFBP N-terminal domain. Intrachain disulfides connect Cys-40-Cys-66, Cys-44-Cys-68, Cys-49-Cys-69, Cys-55-Cys-72, Cys-80-Cys-94, Cys-88-Cys-106, Cys-108-Cys-127, and Cys-116-Cys-152. The region spanning 88–154 (CAPGLQCLQP…VPVQWGNCGD (67 aa)) is the Kazal-like domain. The serine protease stretch occupies residues 202-362 (GSGFIVSEDG…IPSDRVRQFL (161 aa)). Active-site charge relay system residues include His-218, Asp-248, and Ser-326. A PDZ domain is found at 383 to 474 (LQMLSLTVPL…NLLLTVIPET (92 aa)).

Belongs to the peptidase S1C family.

It localises to the secreted. Functionally, serine protease. In Homo sapiens (Human), this protein is Serine protease HTRA4 (HTRA4).